Here is a 963-residue protein sequence, read N- to C-terminus: VPS35 endosomal protein-sorting factor-like (963 aa).

The tract at residues 43-69 (SKTKKVNRKGSTSSTSSSSSSSVVDPL) is disordered. Low complexity predominate over residues 53 to 69 (STSSTSSSSSSSVVDPL). Ser-265 is modified (phosphoserine). Residues 703-719 (ACVAYCFITIPSLAGIF) traverse the membrane as a helical segment.

Belongs to the VPS35L family. As to quaternary structure, component of the heterotrimeric retriever complex formed by VPS26C, VPS29 and VPS35L. Interacts with VPS29. Interacts with COMMD1, CCDC93 and CCDC22; associates with the CCC (COMMD/CCDC22/CCDC93) complex which contains at least COMMD1 (and possibly other COMM domain-containing proteins), CCDC22 and CCDC93. Interacts with WASHC1, WASHC2A and WASHC2C. Interacts with SNX17 and SNX31.

The protein localises to the membrane. The protein resides in the endosome. Functionally, acts as a component of the retriever complex. The retriever complex is a heterotrimeric complex related to retromer cargo-selective complex (CSC) and essential for retromer-independent retrieval and recycling of numerous cargos such as integrin alpha-5/beta-1 (ITGA5:ITGB1). The recruitment of the retriever complex to the endosomal membrane involves CCC and WASH complexes. In the endosomes, drives the retrieval and recycling of NxxY-motif-containing cargo proteins by coupling to SNX17, a cargo essential for the homeostatic maintenance of numerous cell surface proteins associated with processes that include cell migration, cell adhesion, nutrient supply and cell signaling. Involved in copper-dependent ATP7A trafficking between the trans-Golgi network and vesicles in the cell periphery; the function is proposed to depend on its association with the CCC complex and cooperation with the WASH complex on early endosomes. Seems not to be required for CCC complex stability. (Microbial infection) The heterotrimeric retriever complex, in collaboration with the CCC complex, mediates the exit of human papillomavirus to the cell surface. This chain is VPS35 endosomal protein-sorting factor-like, found in Homo sapiens (Human).